Here is a 281-residue protein sequence, read N- to C-terminus: Elongation factor Ts (281 aa).

The interval 80–83 (TDFV) is involved in Mg(2+) ion dislocation from EF-Tu.

The protein belongs to the EF-Ts family.

It is found in the cytoplasm. Its function is as follows. Associates with the EF-Tu.GDP complex and induces the exchange of GDP to GTP. It remains bound to the aminoacyl-tRNA.EF-Tu.GTP complex up to the GTP hydrolysis stage on the ribosome. The protein is Elongation factor Ts of Vibrio parahaemolyticus serotype O3:K6 (strain RIMD 2210633).